A 406-amino-acid chain; its full sequence is Tyrosine--tRNA ligase (406 aa).

Tyrosine 35 is an L-tyrosine binding site. The short motif at 40–49 is the 'HIGH' region element; that stretch reads PTADSLHIGH. The L-tyrosine site is built by tyrosine 168 and glutamine 172. The short motif at 228–232 is the 'KMSKS' region element; sequence KMGKT. Position 231 (lysine 231) interacts with ATP. In terms of domain architecture, S4 RNA-binding spans 340-406; it reads CSVVELLVDI…KKNYNRIIIK (67 aa).

This sequence belongs to the class-I aminoacyl-tRNA synthetase family. TyrS type 1 subfamily. Homodimer.

It is found in the cytoplasm. It catalyses the reaction tRNA(Tyr) + L-tyrosine + ATP = L-tyrosyl-tRNA(Tyr) + AMP + diphosphate + H(+). Catalyzes the attachment of tyrosine to tRNA(Tyr) in a two-step reaction: tyrosine is first activated by ATP to form Tyr-AMP and then transferred to the acceptor end of tRNA(Tyr). The protein is Tyrosine--tRNA ligase of Clostridium kluyveri (strain NBRC 12016).